A 494-amino-acid polypeptide reads, in one-letter code: Ribose import ATP-binding protein RbsA (494 aa).

2 consecutive ABC transporter domains span residues 2–239 and 251–493; these read IDMR…VGRQ and IGEE…TGGN. Residue 34–41 coordinates ATP; the sequence is GENGAGKS.

Belongs to the ABC transporter superfamily. Ribose importer (TC 3.A.1.2.1) family. As to quaternary structure, the complex is composed of an ATP-binding protein (RbsA), two transmembrane proteins (RbsC) and a solute-binding protein (RbsB).

The protein localises to the cell membrane. The enzyme catalyses D-ribose(out) + ATP + H2O = D-ribose(in) + ADP + phosphate + H(+). Functionally, part of the ABC transporter complex RbsABC involved in ribose import. Responsible for energy coupling to the transport system. In Geobacillus kaustophilus (strain HTA426), this protein is Ribose import ATP-binding protein RbsA.